The following is a 159-amino-acid chain: NADH-quinone oxidoreductase subunit I (159 aa).

4Fe-4S ferredoxin-type domains are found at residues 51 to 80 (RRYEHGEERCIACKLCEAICPAQAIVIEAD) and 90 to 119 (TRYDIDMTKCIYCGLCQEACPVDAIVEGPN). The [4Fe-4S] cluster site is built by Cys-60, Cys-63, Cys-66, Cys-70, Cys-99, Cys-102, Cys-105, and Cys-109.

It belongs to the complex I 23 kDa subunit family. In terms of assembly, NDH-1 is composed of 14 different subunits. Subunits NuoA, H, J, K, L, M, N constitute the membrane sector of the complex. The cofactor is [4Fe-4S] cluster.

Its subcellular location is the cell inner membrane. The catalysed reaction is a quinone + NADH + 5 H(+)(in) = a quinol + NAD(+) + 4 H(+)(out). Functionally, NDH-1 shuttles electrons from NADH, via FMN and iron-sulfur (Fe-S) centers, to quinones in the respiratory chain. The immediate electron acceptor for the enzyme in this species is believed to be ubiquinone. Couples the redox reaction to proton translocation (for every two electrons transferred, four hydrogen ions are translocated across the cytoplasmic membrane), and thus conserves the redox energy in a proton gradient. This is NADH-quinone oxidoreductase subunit I from Rickettsia rickettsii (strain Sheila Smith).